Consider the following 809-residue polypeptide: Sucrose synthase 2 (809 aa).

A GT-B glycosyltransferase region spans residues 278-756 (MVFNVVILSP…GLQRIYERYT (479 aa)).

Belongs to the glycosyltransferase 1 family. Plant sucrose synthase subfamily.

The enzyme catalyses an NDP-alpha-D-glucose + D-fructose = a ribonucleoside 5'-diphosphate + sucrose + H(+). In terms of biological role, sucrose-cleaving enzyme that provides UDP-glucose and fructose for various metabolic pathways. In Pisum sativum (Garden pea), this protein is Sucrose synthase 2 (SUS2).